The primary structure comprises 278 residues: Digeranylgeranylglyceryl phosphate synthase (278 aa).

Helical transmembrane passes span 12-32 (LKNC…ASYF), 34-54 (LATV…CGFG), 91-111 (LLVF…LMAV), 129-149 (IIGN…GGIA), 153-173 (IDVT…REII), 204-224 (FLLV…FFGI), 225-245 (YYML…YNLV), and 257-277 (SRNI…GSLF).

The protein belongs to the UbiA prenyltransferase family. DGGGP synthase subfamily. Mg(2+) is required as a cofactor.

The protein localises to the cell membrane. It catalyses the reaction sn-3-O-(geranylgeranyl)glycerol 1-phosphate + (2E,6E,10E)-geranylgeranyl diphosphate = 2,3-bis-O-(geranylgeranyl)-sn-glycerol 1-phosphate + diphosphate. Its pathway is membrane lipid metabolism; glycerophospholipid metabolism. Functionally, prenyltransferase that catalyzes the transfer of the geranylgeranyl moiety of geranylgeranyl diphosphate (GGPP) to the C2 hydroxyl of (S)-3-O-geranylgeranylglyceryl phosphate (GGGP). This reaction is the second ether-bond-formation step in the biosynthesis of archaeal membrane lipids. The sequence is that of Digeranylgeranylglyceryl phosphate synthase from Methanococcus maripaludis (strain C7 / ATCC BAA-1331).